Consider the following 38-residue polypeptide: Photosystem II reaction center protein L (38 aa).

A helical transmembrane segment spans residues 17–37 (SLFWGLLLIFVLAILFSSYIF).

It belongs to the PsbL family. PSII is composed of 1 copy each of membrane proteins PsbA, PsbB, PsbC, PsbD, PsbE, PsbF, PsbH, PsbI, PsbJ, PsbK, PsbL, PsbM, PsbT, PsbX, PsbY, PsbZ, Psb30/Ycf12, at least 3 peripheral proteins of the oxygen-evolving complex and a large number of cofactors. It forms dimeric complexes.

The protein resides in the plastid. The protein localises to the cyanelle thylakoid membrane. Functionally, one of the components of the core complex of photosystem II (PSII). PSII is a light-driven water:plastoquinone oxidoreductase that uses light energy to abstract electrons from H(2)O, generating O(2) and a proton gradient subsequently used for ATP formation. It consists of a core antenna complex that captures photons, and an electron transfer chain that converts photonic excitation into a charge separation. This subunit is found at the monomer-monomer interface and is required for correct PSII assembly and/or dimerization. This Cyanophora paradoxa protein is Photosystem II reaction center protein L.